The sequence spans 386 residues: Succinate--CoA ligase [ADP-forming] subunit beta (386 aa).

In terms of domain architecture, ATP-grasp spans 9–244 (KEILRKYGVP…HDEEDPLETR (236 aa)). ATP contacts are provided by residues K46, 53 to 55 (GRG), E99, C102, and E107. Mg(2+) is bound by residues N199 and D213. Substrate contacts are provided by residues N264 and 321-323 (GIM).

It belongs to the succinate/malate CoA ligase beta subunit family. As to quaternary structure, heterotetramer of two alpha and two beta subunits. The cofactor is Mg(2+).

It carries out the reaction succinate + ATP + CoA = succinyl-CoA + ADP + phosphate. It catalyses the reaction GTP + succinate + CoA = succinyl-CoA + GDP + phosphate. The protein operates within carbohydrate metabolism; tricarboxylic acid cycle; succinate from succinyl-CoA (ligase route): step 1/1. Succinyl-CoA synthetase functions in the citric acid cycle (TCA), coupling the hydrolysis of succinyl-CoA to the synthesis of either ATP or GTP and thus represents the only step of substrate-level phosphorylation in the TCA. The beta subunit provides nucleotide specificity of the enzyme and binds the substrate succinate, while the binding sites for coenzyme A and phosphate are found in the alpha subunit. In Rickettsia akari (strain Hartford), this protein is Succinate--CoA ligase [ADP-forming] subunit beta.